A 534-amino-acid polypeptide reads, in one-letter code: Serine/threonine-protein kinase Nek6 (534 aa).

The Protein kinase domain occupies 4-257; it reads YEVVEQIGRG…AGELLRHPYL (254 aa). Residues 10 to 18 and K33 each bind ATP; that span reads IGRGAYGSA. Catalysis depends on D129, which acts as the Proton acceptor. Disordered stretches follow at residues 278-306 and 425-449; these read KSNL…SSEA and KAHT…SSPK.

The protein belongs to the protein kinase superfamily. NEK Ser/Thr protein kinase family. NIMA subfamily. As to quaternary structure, interacts with DIS1. Ubiquitinated by the E3 ligase DIS1. Ubiquitination of NEK6 leads to its degradation via the 26S proteasome-dependent pathway. As to expression, expressed in anthers, pistils and leaves.

Its subcellular location is the cytoplasm. It carries out the reaction L-seryl-[protein] + ATP = O-phospho-L-seryl-[protein] + ADP + H(+). The enzyme catalyses L-threonyl-[protein] + ATP = O-phospho-L-threonyl-[protein] + ADP + H(+). Functionally, may be involved in plant development processes. In Oryza sativa subsp. japonica (Rice), this protein is Serine/threonine-protein kinase Nek6.